We begin with the raw amino-acid sequence, 218 residues long: Adenylate kinase (218 aa).

Position 10-15 (10-15 (GAGKGT)) interacts with ATP. The interval 30–59 (STGDMFRAAMADQTDLGVKAKAFIDKGELV) is NMP. AMP is bound by residues threonine 31, arginine 36, 57–59 (ELV), 85–88 (GFPR), and glutamine 92. Residues 126–164 (GRFICKTCGATYHKLYHPTQVEGTCDRCGGHVFFQREDD) are LID. Arginine 127 lines the ATP pocket. Residues cysteine 130 and cysteine 133 each contribute to the Zn(2+) site. 136–137 (TY) serves as a coordination point for ATP. Residues cysteine 150 and cysteine 153 each coordinate Zn(2+). The AMP site is built by arginine 161 and arginine 172. Glutamine 200 contacts ATP.

It belongs to the adenylate kinase family. Monomer.

It localises to the cytoplasm. The enzyme catalyses AMP + ATP = 2 ADP. It functions in the pathway purine metabolism; AMP biosynthesis via salvage pathway; AMP from ADP: step 1/1. Catalyzes the reversible transfer of the terminal phosphate group between ATP and AMP. Plays an important role in cellular energy homeostasis and in adenine nucleotide metabolism. The polypeptide is Adenylate kinase (Latilactobacillus sakei subsp. sakei (strain 23K) (Lactobacillus sakei subsp. sakei)).